A 283-amino-acid chain; its full sequence is Bifunctional protein FolD (283 aa).

Residues 166–168 (GAS) and I232 contribute to the NADP(+) site.

It belongs to the tetrahydrofolate dehydrogenase/cyclohydrolase family. As to quaternary structure, homodimer.

It carries out the reaction (6R)-5,10-methylene-5,6,7,8-tetrahydrofolate + NADP(+) = (6R)-5,10-methenyltetrahydrofolate + NADPH. The enzyme catalyses (6R)-5,10-methenyltetrahydrofolate + H2O = (6R)-10-formyltetrahydrofolate + H(+). Its pathway is one-carbon metabolism; tetrahydrofolate interconversion. Functionally, catalyzes the oxidation of 5,10-methylenetetrahydrofolate to 5,10-methenyltetrahydrofolate and then the hydrolysis of 5,10-methenyltetrahydrofolate to 10-formyltetrahydrofolate. The polypeptide is Bifunctional protein FolD (Mannheimia succiniciproducens (strain KCTC 0769BP / MBEL55E)).